The primary structure comprises 454 residues: Toluate 1,2-dioxygenase subunit alpha (454 aa).

The 98-residue stretch at 51-148 folds into the Rieske domain; it reads IYLAHESQIP…SFDCDGSHDL (98 aa). Cys92, His94, Cys112, and His115 together coordinate [2Fe-2S] cluster. Fe cation-binding residues include His221 and His226.

Belongs to the bacterial ring-hydroxylating dioxygenase alpha subunit family. As to quaternary structure, this dioxygenase system consists of three proteins: the two subunits of the hydroxylase component (XylX and XylY), and an electron transfer component (XylZ). [2Fe-2S] cluster serves as cofactor. Fe cation is required as a cofactor.

It functions in the pathway xenobiotic degradation; toluene degradation. The sequence is that of Toluate 1,2-dioxygenase subunit alpha (xylX) from Pseudomonas putida (Arthrobacter siderocapsulatus).